The chain runs to 302 residues: Aspartate carbamoyltransferase catalytic subunit (302 aa).

Residues arginine 51 and threonine 52 each contribute to the carbamoyl phosphate site. Residue lysine 80 coordinates L-aspartate. Carbamoyl phosphate contacts are provided by arginine 101, histidine 129, and glutamine 132. The L-aspartate site is built by arginine 162 and arginine 223. Carbamoyl phosphate is bound by residues leucine 261 and proline 262.

It belongs to the aspartate/ornithine carbamoyltransferase superfamily. ATCase family. As to quaternary structure, heterododecamer (2C3:3R2) of six catalytic PyrB chains organized as two trimers (C3), and six regulatory PyrI chains organized as three dimers (R2).

The enzyme catalyses carbamoyl phosphate + L-aspartate = N-carbamoyl-L-aspartate + phosphate + H(+). It participates in pyrimidine metabolism; UMP biosynthesis via de novo pathway; (S)-dihydroorotate from bicarbonate: step 2/3. Its function is as follows. Catalyzes the condensation of carbamoyl phosphate and aspartate to form carbamoyl aspartate and inorganic phosphate, the committed step in the de novo pyrimidine nucleotide biosynthesis pathway. This is Aspartate carbamoyltransferase catalytic subunit from Chromobacterium violaceum (strain ATCC 12472 / DSM 30191 / JCM 1249 / CCUG 213 / NBRC 12614 / NCIMB 9131 / NCTC 9757 / MK).